Consider the following 527-residue polypeptide: FHA domain-containing protein FhaA (527 aa).

A Phosphothreonine modification is found at T116. The segment at 119–426 is disordered; that stretch reads FRARGTVNPD…APGGYSGYGQ (308 aa). The segment covering 170 to 188 has biased composition (basic and acidic residues); the sequence is RPDEYYDDRYARPQEDPRG. Low complexity-rich tracts occupy residues 199 to 209 and 256 to 266; these read RGGYPPETGGY and YQDQGRGYPDQ. Positions 271–283 are enriched in pro residues; that stretch reads YPPPYEQRPPVSP. Positions 284 to 299 are enriched in low complexity; that stretch reads GPAAGYGAPGYDQGYR. Positions 300–322 are enriched in gly residues; the sequence is QSGGYGPSPGGGQPGYGGYGEYG. The span at 345–366 shows a compositional bias: low complexity; that stretch reads RPAYPDQGGYDQGYQQGATTYG. Positions 455 to 504 constitute an FHA domain; it reads NIIGRGQDAQFRLPDTGVSRRHLEIRWDGQVALLADLNSTNGTTVNNAPV.

In terms of assembly, interacts with (phosphorylated) MviN and (phosphorylated) PknB via the FHA domain. Binds to the PknB juxtamembrane domain with an affinity that is modulated by the degree and the pattern of phosphorylation of this juxtamembrane domain. Post-translationally, phosphorylated by PknB.

It is found in the cytoplasm. Its function is as follows. Regulates cell growth and peptidoglycan synthesis by binding to MviN. May inhibit the late stages of peptidoglycan synthesis. In Mycobacterium tuberculosis (strain ATCC 25618 / H37Rv), this protein is FHA domain-containing protein FhaA (fhaA).